Here is a 72-residue protein sequence, read N- to C-terminus: Translation initiation factor IF-1 (72 aa).

Positions 1 to 72 (MAKEDSIEME…SKGRIVYRAR (72 aa)) constitute an S1-like domain.

It belongs to the IF-1 family. In terms of assembly, component of the 30S ribosomal translation pre-initiation complex which assembles on the 30S ribosome in the order IF-2 and IF-3, IF-1 and N-formylmethionyl-tRNA(fMet); mRNA recruitment can occur at any time during PIC assembly.

It is found in the cytoplasm. Its function is as follows. One of the essential components for the initiation of protein synthesis. Stabilizes the binding of IF-2 and IF-3 on the 30S subunit to which N-formylmethionyl-tRNA(fMet) subsequently binds. Helps modulate mRNA selection, yielding the 30S pre-initiation complex (PIC). Upon addition of the 50S ribosomal subunit IF-1, IF-2 and IF-3 are released leaving the mature 70S translation initiation complex. This Nitrosococcus oceani (strain ATCC 19707 / BCRC 17464 / JCM 30415 / NCIMB 11848 / C-107) protein is Translation initiation factor IF-1.